The sequence spans 26 residues: Acetylcholine receptor subunit delta (26 aa).

Belongs to the ligand-gated ion channel (TC 1.A.9) family. Acetylcholine receptor (TC 1.A.9.1) subfamily. In terms of assembly, pentamer of two alpha chains, and one each of the beta, delta, and gamma chains.

It localises to the postsynaptic cell membrane. The protein localises to the cell membrane. The enzyme catalyses K(+)(in) = K(+)(out). It carries out the reaction Na(+)(in) = Na(+)(out). Functionally, after binding acetylcholine, the AChR responds by an extensive change in conformation that affects all subunits and leads to opening of an ion-conducting channel across the plasma membrane. This chain is Acetylcholine receptor subunit delta (chrnd), found in Electrophorus electricus (Electric eel).